Reading from the N-terminus, the 309-residue chain is ADP-L-glycero-D-manno-heptose-6-epimerase (309 aa).

NADP(+) contacts are provided by residues 10–11 (FI), 31–32 (DN), Lys-38, Lys-53, 75–79 (EGACS), and Asn-92. The active-site Proton acceptor is Tyr-140. Lys-144 lines the NADP(+) pocket. Asn-169 is a substrate binding site. NADP(+) is bound by residues Val-170 and Lys-178. The Proton acceptor role is filled by Lys-178. Substrate contacts are provided by residues Ser-180, His-187, 201 to 204 (FEGS), Arg-209, and Tyr-272.

This sequence belongs to the NAD(P)-dependent epimerase/dehydratase family. HldD subfamily. Homopentamer. NADP(+) is required as a cofactor.

The catalysed reaction is ADP-D-glycero-beta-D-manno-heptose = ADP-L-glycero-beta-D-manno-heptose. Its pathway is nucleotide-sugar biosynthesis; ADP-L-glycero-beta-D-manno-heptose biosynthesis; ADP-L-glycero-beta-D-manno-heptose from D-glycero-beta-D-manno-heptose 7-phosphate: step 4/4. In terms of biological role, catalyzes the interconversion between ADP-D-glycero-beta-D-manno-heptose and ADP-L-glycero-beta-D-manno-heptose via an epimerization at carbon 6 of the heptose. The polypeptide is ADP-L-glycero-D-manno-heptose-6-epimerase (Enterobacter sp. (strain 638)).